A 128-amino-acid chain; its full sequence is Small nuclear ribonucleoprotein SmD3a (128 aa).

The region spanning Ile7–Leu79 is the Sm domain. A disordered region spans residues Gly90–Arg128. Residues Thr112–Gly121 are compositionally biased toward gly residues.

Belongs to the snRNP core protein family. Expressed in young seedlings, roots, leaves, flowers and immature siliques.

The protein resides in the cytoplasm. The protein localises to the cytosol. It is found in the nucleus. Functionally, core component of the spliceosomal U1, U2, U4 and U5 small nuclear ribonucleoproteins (snRNPs), the building blocks of the spliceosome. May play a minor role in the splicing of cellular pre-mRNAs. The protein is Small nuclear ribonucleoprotein SmD3a of Arabidopsis thaliana (Mouse-ear cress).